Here is a 103-residue protein sequence, read N- to C-terminus: Thioredoxin-1 (103 aa).

Residues 2 to 103 (VTQFKTASEF…AIKQAIAANA (102 aa)) enclose the Thioredoxin domain. Residues cysteine 30 and cysteine 33 each act as nucleophile in the active site. Residues cysteine 30 and cysteine 33 are joined by a disulfide bond. Glycyl lysine isopeptide (Lys-Gly) (interchain with G-Cter in ubiquitin) cross-links involve residues lysine 54, lysine 66, and lysine 96.

It belongs to the thioredoxin family. As to quaternary structure, monomer. Part of the heterodimeric LMA1 complex together with the proteinase inhibitor PBI2. Most of the thioredoxin of yeast is in this complex rather than the well-studied monomer. LMA1 binds to the ATPase SEC18. Reversible disulfide bond formation between Cys-30 and Cys-33, reverted by thioredoxin reductase TRR1 using NADPH as hydrogen donor.

It is found in the nucleus. It localises to the cytoplasm. The protein localises to the golgi apparatus membrane. Its subcellular location is the mitochondrion intermembrane space. Functionally, participates as a hydrogen donor in redox reactions through the reversible oxidation of its active center dithiol to a disulfide, accompanied by the transfer of 2 electrons and 2 protons. It is involved in many cellular processes, including deoxyribonucleotide synthesis, repair of oxidatively damaged proteins, protein folding, sulfur metabolism, and redox homeostasis. Thioredoxin-dependent enzymes include phosphoadenosine-phosphosulfate reductase MET16, alkyl-hydroperoxide reductase DOT5, thioredoxin peroxidases TSA1 and TSA2, alkyl hydroperoxide reductase AHP1, and peroxiredoxin HYR1. Thioredoxin is also involved in protection against reducing stress. As part of the LMA1 complex, it is involved in the facilitation of vesicle fusion such as homotypic vacuole and ER-derived COPII vesicle fusion with the Golgi. This activity does not require the redox mechanism. The polypeptide is Thioredoxin-1 (TRX1) (Saccharomyces cerevisiae (strain ATCC 204508 / S288c) (Baker's yeast)).